A 132-amino-acid polypeptide reads, in one-letter code: Myelin P2 protein (132 aa).

Position 2 is an N-acetylserine (serine 2). Residues arginine 107 and 127 to 129 each bind (9Z)-octadecenoate; that span reads RIY. Hexadecanoate-binding positions include arginine 107 and 127–129; that span reads RIY.

Belongs to the calycin superfamily. Fatty-acid binding protein (FABP) family. In terms of assembly, monomer.

Its subcellular location is the cytoplasm. Its function is as follows. May play a role in lipid transport protein in Schwann cells. May bind cholesterol. The sequence is that of Myelin P2 protein (PMP2) from Oryctolagus cuniculus (Rabbit).